We begin with the raw amino-acid sequence, 78 residues long: UPF0369 protein RF_1112 (78 aa).

Belongs to the SDHAF4 family.

This chain is UPF0369 protein RF_1112, found in Rickettsia felis (strain ATCC VR-1525 / URRWXCal2) (Rickettsia azadi).